A 1377-amino-acid chain; its full sequence is Neogenin (1377 aa).

An N-terminal signal peptide occupies residues 1-2 (AA). The Extracellular segment spans residues 3–1074 (AKNGSPPQSA…PTSPLDSNML (1072 aa)). 4 Ig-like C2-type domains span residues 21 to 114 (PLYF…RTAK), 121 to 206 (PRFT…EAEL), 198 to 305 (PKFS…AELT), and 310 to 395 (PEFL…AQLI). The N-linked (GlcNAc...) asparagine glycan is linked to Asn-42. 3 disulfide bridges follow: Cys-43–Cys-98, Cys-142–Cys-190, and Cys-239–Cys-289. N-linked (GlcNAc...) asparagine glycosylation is present at Asn-179. Asn-295 carries an N-linked (GlcNAc...) asparagine glycan. A disulfide bridge connects residues Cys-331 and Cys-379. 6 Fibronectin type-III domains span residues 410–504 (APRD…TQPE), 510–600 (PAPN…TLSD), 605–700 (APQN…TFES), 710–800 (VPSS…RPHT), 825–924 (PPVG…LVPT), and 926–1023 (PPKD…TPKA). Residues Asn-439 and Asn-458 are each glycosylated (N-linked (GlcNAc...) asparagine). N-linked (GlcNAc...) asparagine glycosylation is found at Asn-608 and Asn-684. N-linked (GlcNAc...) asparagine glycosylation is present at Asn-878. Positions 1010–1066 (GPMSEAVQFRTPKADSSDKMPNDQALGSAGKGGRLPDLGSDYKPPMSGSNSPHGSPT) are disordered. A compositionally biased stretch (basic and acidic residues) spans 1021–1030 (PKADSSDKMP). Residues 1056–1066 (SGSNSPHGSPT) show a composition bias toward polar residues. The chain crosses the membrane as a helical span at residues 1075–1095 (LVIIVSIGVITIVVVVIIAVF). The Cytoplasmic portion of the chain corresponds to 1096 to 1377 (CTRRTTSHQK…MKDLNAITTA (282 aa)). Residues 1143–1281 (PIDKSPDPNP…SHPLKSFAVP (139 aa)) are disordered. Phosphoserine occurs at positions 1147 and 1163. 3 stretches are compositionally biased toward polar residues: residues 1160–1176 (PRNS…MDSN), 1213–1238 (QPPQ…TCCT), and 1246–1265 (ATSS…QSLP). Phosphothreonine is present on Thr-1167. Ser-1317 is subject to Phosphoserine. The residue at position 1320 (Thr-1320) is a Phosphothreonine. Ser-1348, Ser-1350, and Ser-1351 each carry phosphoserine.

Belongs to the immunoglobulin superfamily. DCC family. Interacts with MYO10. Interacts with RGMA and RGMB. Interacts with BMP2, BMP4, BMP6, and BMP7.

Its subcellular location is the cell membrane. Its function is as follows. Multi-functional cell surface receptor regulating cell adhesion in many diverse developmental processes, including neural tube and mammary gland formation, myogenesis and angiogenesis. Receptor for members of the BMP, netrin, and repulsive guidance molecule (RGM) families. Netrin-Neogenin interactions result in a chemoattractive axon guidance response and cell-cell adhesion, the interaction between NEO1/Neogenin and RGMa and RGMb induces a chemorepulsive response. This is Neogenin (Neo1) from Rattus norvegicus (Rat).